A 284-amino-acid chain; its full sequence is Elongation factor Ts (284 aa).

The involved in Mg(2+) ion dislocation from EF-Tu stretch occupies residues 80–83; that stretch reads TDFV.

Belongs to the EF-Ts family.

It localises to the cytoplasm. Its function is as follows. Associates with the EF-Tu.GDP complex and induces the exchange of GDP to GTP. It remains bound to the aminoacyl-tRNA.EF-Tu.GTP complex up to the GTP hydrolysis stage on the ribosome. The sequence is that of Elongation factor Ts from Neisseria meningitidis serogroup C (strain 053442).